The sequence spans 336 residues: Calcium uniporter regulatory subunit MCUb, mitochondrial (336 aa).

A mitochondrion-targeting transit peptide spans 1–35 (MLQRGLWPWRTRLLPTPGTWRPARPWPLPPPPQVL). Residues 179 to 210 (ESQKKREHHLLEKIDHLKEQLQPLEQVKAGIE) are a coiled coil. Transmembrane regions (helical) follow at residues 220–240 (LLWA…WLTW) and 250–270 (PVTY…FIVT). The stretch at 297-323 (FDVQQYNKLKEDLAKAKESLKQARHSL) forms a coiled coil.

This sequence belongs to the MCU (TC 1.A.77) family. In terms of assembly, homooligomer. Associates with the uniplex complex, composed of MCU, MICU1, MICU2 and EMRE/SMDT1, inhibiting its activity.

The protein resides in the mitochondrion inner membrane. Its function is as follows. Negative regulator of the mitochondrial calcium uniporter (MCU), a channel that mediates calcium uptake into the mitochondrial matrix. MCUB is required to limit mitochondrial calcium overload during stress. Acts as a dominant-negative regulator that displaces MCU from the functional uniplex complex and thereby decreases the association of calcium sensors MICU1 and MICU2, preventing channel gating. Mitochondrial calcium homeostasis plays key roles in mitochondrial metabolism. Acts as an important regulator of mitochondrial metabolism in response to stress in muscle cells: induced in response to fasting, leading to restrict mitochondrial calcium uptake, resulting in reprogramming of mitochondria toward fatty acid oxidation preference. Acts as a regulator of macrophage polarization during skeletal muscle regeneration: inhibition of mitochondrial calcium uptake drives differentiation of macrophages with anti-inflammatory profile, promoting the differentiation and fusion of satellite cells. The polypeptide is Calcium uniporter regulatory subunit MCUb, mitochondrial (Homo sapiens (Human)).